A 66-amino-acid chain; its full sequence is DNA gyrase inhibitor YacG (66 aa).

Zn(2+) contacts are provided by Cys9, Cys12, Cys28, and Cys32.

The protein belongs to the DNA gyrase inhibitor YacG family. As to quaternary structure, interacts with GyrB. Zn(2+) serves as cofactor.

Its function is as follows. Inhibits all the catalytic activities of DNA gyrase by preventing its interaction with DNA. Acts by binding directly to the C-terminal domain of GyrB, which probably disrupts DNA binding by the gyrase. The polypeptide is DNA gyrase inhibitor YacG (Pseudomonas aeruginosa (strain LESB58)).